A 113-amino-acid polypeptide reads, in one-letter code: MFSIRIATVVLAASAALRPPARITNTETPVNQCGSGSIQCCESVQSASAAQAAGILGPLDILTNLQGLVGSHCSPLAAVGVSGTSCSSQTVCCKDVSKSGLVNLGCSPINLNL.

The N-terminal stretch at Met-1–Ile-23 is a signal peptide. Disulfide bonds link Cys-33–Cys-92, Cys-40–Cys-86, Cys-41–Cys-73, and Cys-93–Cys-106.

It belongs to the fungal hydrophobin family. In terms of assembly, self-assembles to form functional amyloid fibrils called rodlets. Self-assembly into fibrillar rodlets occurs spontaneously at hydrophobic:hydrophilic interfaces and the rodlets further associate laterally to form amphipathic monolayers.

The protein localises to the secreted. It localises to the cell wall. Aerial growth, conidiation, and dispersal of filamentous fungi in the environment rely upon a capability of their secreting small amphipathic proteins called hydrophobins (HPBs) with low sequence identity. Class I can self-assemble into an outermost layer of rodlet bundles on aerial cell surfaces, conferring cellular hydrophobicity that supports fungal growth, development and dispersal; whereas Class II form highly ordered films at water-air interfaces through intermolecular interactions but contribute nothing to the rodlet structure. Fbh1 is a fruiting body-specific class I hydrophobin that is involved in the growth rate and primordia formation. This chain is Fruiting body-specific class I hydrophobin fbh1, found in Pleurotus ostreatus (Oyster mushroom).